Consider the following 281-residue polypeptide: Large ribosomal subunit protein uL2 (281 aa).

The disordered stretch occupies residues 215–281 (LGRRPHTRGV…RRNNRKDSKK (67 aa)). The span at 258–269 (KTRDNKSTDKFI) shows a compositional bias: basic and acidic residues. Over residues 270-281 (VRRRNNRKDSKK) the composition is skewed to basic residues.

This sequence belongs to the universal ribosomal protein uL2 family. In terms of assembly, part of the 50S ribosomal subunit. Forms a bridge to the 30S subunit in the 70S ribosome.

Functionally, one of the primary rRNA binding proteins. Required for association of the 30S and 50S subunits to form the 70S ribosome, for tRNA binding and peptide bond formation. It has been suggested to have peptidyltransferase activity; this is somewhat controversial. Makes several contacts with the 16S rRNA in the 70S ribosome. In Pelagibacter ubique (strain HTCC1062), this protein is Large ribosomal subunit protein uL2.